A 374-amino-acid chain; its full sequence is O-methyltransferase 16 (374 aa).

The S-adenosyl-L-homocysteine site is built by Ser195, Gly219, Asp242, Asp262, and Lys276. Asp242 serves as a coordination point for S-adenosyl-L-methionine. His280 (proton acceptor) is an active-site residue.

Belongs to the class I-like SAM-binding methyltransferase superfamily. Cation-independent O-methyltransferase family. Homodimer. In terms of tissue distribution, expressed mainly in vasculature and cortex tissues at low levels.

It catalyses the reaction dopamine + S-adenosyl-L-methionine = 4-methoxytyramine + S-adenosyl-L-homocysteine + H(+). It participates in aromatic compound metabolism. The protein operates within alkaloid biosynthesis. Its function is as follows. O-methyltransferase participating in the biosynthesis of natural products derived from phenylethylamine, including mescaline, a natural hallucinogen potentially used in psychotherapeutic treatments. Catalyzes the O-methylation of dopamine to produce 4-methoxytyramine. In Lophophora williamsii (Peyote), this protein is O-methyltransferase 16.